The following is a 402-amino-acid chain: Prostaglandin E2 receptor EP1 subtype (402 aa).

Residues 1-35 (MSPCGPLNLSLAGEATTCAAPWVPNTSAVPPSGAS) lie on the Extracellular side of the membrane. 2 N-linked (GlcNAc...) asparagine glycosylation sites follow: asparagine 8 and asparagine 25. A helical membrane pass occupies residues 36-62 (PALPIFSMTLGAVSNLLALALLAQAAG). Over 63–72 (RLRRRRSAAT) the chain is Cytoplasmic. A helical membrane pass occupies residues 73 to 96 (FLLFVASLLATDLAGHVIPGALVL). The Extracellular portion of the chain corresponds to 97-111 (RLYTAGRAPAGGACH). A disulfide bridge connects residues cysteine 110 and cysteine 188. A helical membrane pass occupies residues 112–133 (FLGGCMVFFGLCPLLLGCGMAV). Over 134–155 (ERCVGVTRPLLHAARVSVARAR) the chain is Cytoplasmic. Residues 156–177 (LALAAVAAVALAVALLPLARVG) form a helical membrane-spanning segment. Residues 178 to 201 (RYELQYPGTWCFIGLGPPGGWRQA) lie on the Extracellular side of the membrane. The chain crosses the membrane as a helical span at residues 202-227 (LLAGLFASLGLVALLAALVCNTLSGL). Residues 228 to 294 (ALLRARWRRR…ARRARAHDVE (67 aa)) are Cytoplasmic-facing. Positions 238–266 (SRRPPPASGPDSRRRWGAHGPRSASASSA) are disordered. Residues 295-321 (MVGQLVGIMVVSCICWSPMLVLVALAV) traverse the membrane as a helical segment. Topologically, residues 322–332 (GGWSSTSLQRP) are extracellular. The chain crosses the membrane as a helical span at residues 333-354 (LFLAVRLASWNQILDPWVYILL). Residues 355–402 (RQAVLRQLLRLLPPRAGAKGGPAGLGLTPSAWEASSLRSSRHSGLSHF) lie on the Cytoplasmic side of the membrane.

It belongs to the G-protein coupled receptor 1 family. Post-translationally, phosphorylated. In terms of tissue distribution, abundant in kidney. Lower level expression in lung, skeletal muscle and spleen, lowest expression in testis and not detected in liver brain and heart.

It localises to the cell membrane. Its function is as follows. Receptor for prostaglandin E2 (PGE2). The activity of this receptor is mediated by G(q) proteins which activate a phosphatidylinositol-calcium second messenger system. May play a role as an important modulator of renal function. Implicated the smooth muscle contractile response to PGE2 in various tissues. This is Prostaglandin E2 receptor EP1 subtype (PTGER1) from Homo sapiens (Human).